The following is a 178-amino-acid chain: Inorganic pyrophosphatase (178 aa).

3 residues coordinate substrate: Lys29, Arg43, and Tyr55. Positions 65, 70, and 102 each coordinate Mg(2+). Tyr141 contacts substrate.

This sequence belongs to the PPase family. Homohexamer. Mg(2+) serves as cofactor.

It localises to the cytoplasm. The enzyme catalyses diphosphate + H2O = 2 phosphate + H(+). Functionally, catalyzes the hydrolysis of inorganic pyrophosphate (PPi) forming two phosphate ions. The protein is Inorganic pyrophosphatase of Rickettsia typhi (strain ATCC VR-144 / Wilmington).